Reading from the N-terminus, the 154-residue chain is Protein FAM162A (154 aa).

The segment at 76–102 (RFKKEDEIPETVSLEMLDTAKNKMRVK) is required for proapoptotic activity. The chain crosses the membrane as a helical span at residues 103–120 (ISYLMIALTVVGCICMVI).

Belongs to the UPF0389 family. As to quaternary structure, interacts with HSP90AB1; HSP90AB1 is essential for FAM162A mitochondrial localization and pro-apoptotic activity. Interacts with VDAC2; the interaction is probably involved in inducing mitochondrial permeability transition.

Its subcellular location is the mitochondrion membrane. Functionally, proposed to be involved in regulation of apoptosis; the exact mechanism may differ between cell types/tissues. May be involved in hypoxia-induced cell death of transformed cells implicating cytochrome C release and caspase activation (such as CASP9) and inducing mitochondrial permeability transition. May be involved in hypoxia-induced cell death of neuronal cells probably by promoting release of AIFM1 from mitochondria to cytoplasm and its translocation to the nucleus; however, the involvement of caspases has been reported conflictingly. This chain is Protein FAM162A (FAM162A), found in Pongo abelii (Sumatran orangutan).